Consider the following 161-residue polypeptide: Phosphopantetheine adenylyltransferase (161 aa).

Serine 11 lines the substrate pocket. ATP-binding positions include 11–12 and histidine 19; that span reads SF. Substrate-binding residues include lysine 43, leucine 75, and arginine 89. Residues 90–92, glutamate 100, and 125–131 each bind ATP; these read GLR and YSFISSS.

It belongs to the bacterial CoaD family. In terms of assembly, homohexamer. Mg(2+) is required as a cofactor.

The protein localises to the cytoplasm. The enzyme catalyses (R)-4'-phosphopantetheine + ATP + H(+) = 3'-dephospho-CoA + diphosphate. Its pathway is cofactor biosynthesis; coenzyme A biosynthesis; CoA from (R)-pantothenate: step 4/5. Its function is as follows. Reversibly transfers an adenylyl group from ATP to 4'-phosphopantetheine, yielding dephospho-CoA (dPCoA) and pyrophosphate. The protein is Phosphopantetheine adenylyltransferase of Staphylococcus saprophyticus subsp. saprophyticus (strain ATCC 15305 / DSM 20229 / NCIMB 8711 / NCTC 7292 / S-41).